Consider the following 344-residue polypeptide: Photosystem II protein D1 (344 aa).

A run of 3 helical transmembrane segments spans residues 29 to 46, 118 to 133, and 142 to 156; these read YIGW…TATT, HFFI…EWEL, and WIAV…AATA. Histidine 118 contacts chlorophyll a. Position 126 (tyrosine 126) interacts with pheophytin a. Residues aspartate 170 and glutamate 189 each coordinate [CaMn4O5] cluster. A helical membrane pass occupies residues 197-218; it reads FHMLGVAGVFGGSLFSAMHGSL. Histidine 198 provides a ligand contact to chlorophyll a. A quinone contacts are provided by residues histidine 215 and 264-265; that span reads SF. Histidine 215 provides a ligand contact to Fe cation. A Fe cation-binding site is contributed by histidine 272. A helical membrane pass occupies residues 274–288; the sequence is FLAAWPVIGIWFTAM. Residues histidine 332, glutamate 333, aspartate 342, and alanine 344 each coordinate [CaMn4O5] cluster.

Belongs to the reaction center PufL/M/PsbA/D family. As to quaternary structure, PSII is composed of 1 copy each of membrane proteins PsbA, PsbB, PsbC, PsbD, PsbE, PsbF, PsbH, PsbI, PsbJ, PsbK, PsbL, PsbM, PsbT, PsbY, PsbZ, Psb30/Ycf12, at least 3 peripheral proteins of the oxygen-evolving complex and a large number of cofactors. It forms dimeric complexes. The cofactor is The D1/D2 heterodimer binds P680, chlorophylls that are the primary electron donor of PSII, and subsequent electron acceptors. It shares a non-heme iron and each subunit binds pheophytin, quinone, additional chlorophylls, carotenoids and lipids. D1 provides most of the ligands for the Mn4-Ca-O5 cluster of the oxygen-evolving complex (OEC). There is also a Cl(-1) ion associated with D1 and D2, which is required for oxygen evolution. The PSII complex binds additional chlorophylls, carotenoids and specific lipids.. Post-translationally, tyr-161 forms a radical intermediate that is referred to as redox-active TyrZ, YZ or Y-Z.

It localises to the plastid. The protein localises to the chloroplast thylakoid membrane. It catalyses the reaction 2 a plastoquinone + 4 hnu + 2 H2O = 2 a plastoquinol + O2. In terms of biological role, photosystem II (PSII) is a light-driven water:plastoquinone oxidoreductase that uses light energy to abstract electrons from H(2)O, generating O(2) and a proton gradient subsequently used for ATP formation. It consists of a core antenna complex that captures photons, and an electron transfer chain that converts photonic excitation into a charge separation. The D1/D2 (PsbA/PsbD) reaction center heterodimer binds P680, the primary electron donor of PSII as well as several subsequent electron acceptors. This is Photosystem II protein D1 from Bigelowiella natans (Pedinomonas minutissima).